A 186-amino-acid polypeptide reads, in one-letter code: Thymidine kinase (186 aa).

8–15 (GPMYSGKT) lines the ATP pocket. E86 acts as the Proton acceptor in catalysis. F118 serves as a coordination point for substrate. Residues C143 and C146 each contribute to the Zn(2+) site. 162 to 166 (IIEIG) is a substrate binding site. 2 residues coordinate Zn(2+): C175 and C178.

This sequence belongs to the thymidine kinase family.

It carries out the reaction thymidine + ATP = dTMP + ADP + H(+). This is Thymidine kinase (TK) from Choristoneura fumiferana (Spruce budworm moth).